The following is a 246-amino-acid chain: Large ribosomal subunit protein uL4 (246 aa).

Residues 37–103 form a disordered region; that stretch reads AAQANRKQDY…TEKDRSLDLN (67 aa). The span at 92–103 shows a compositional bias: basic and acidic residues; that stretch reads PKTEKDRSLDLN.

The protein belongs to the universal ribosomal protein uL4 family. Part of the 50S ribosomal subunit. Interacts weakly with proteins L18e, L24 and L37e. Has been cross-linked to L18e.

Its function is as follows. One of the primary rRNA binding proteins, this protein initially binds near the 5'-end of the 23S rRNA. It is important during the early stages of 50S assembly. In terms of biological role, makes multiple contacts with different domains of the 23S rRNA in the assembled 50S subunit. Functionally, forms part of the polypeptide exit tunnel, in which it helps forms a bend with protein L22. Contacts the macrolide antibiotic spiramycin in the polypeptide exit tunnel. In Haloarcula marismortui (strain ATCC 43049 / DSM 3752 / JCM 8966 / VKM B-1809) (Halobacterium marismortui), this protein is Large ribosomal subunit protein uL4 (rpl4).